Reading from the N-terminus, the 515-residue chain is Nectin-1 (515 aa).

A signal peptide spans 1–30 (MARMGLAGAAGRWWGLALGLTAFFLPGTHT). The region spanning 31 to 141 (QVVQVNDSMY…GNRESQLNLT (111 aa)) is the Ig-like V-type domain. At 31–354 (QVVQVNDSMY…GRRAGQMPTA (324 aa)) the chain is on the extracellular side. N-linked (GlcNAc...) asparagine glycosylation is found at Asn36, Asn72, Asn139, Asn202, Asn286, Asn297, and Asn332. A disulfide bridge links Cys51 with Cys124. Ig-like C2-type domains are found at residues 145–243 (KPTN…TLNV) and 247–334 (PEVT…VNIT). Cystine bridges form between Cys172-Cys226 and Cys269-Cys316. Positions 282-299 (WTTLNGSLPKGVEAQNRT) are interaction with FGFR. A helical transmembrane segment spans residues 355–375 (IIGGVAGSVLLVLIVVGGIIV). The Cytoplasmic portion of the chain corresponds to 376–515 (ALRRRRHTFK…SFISKKEWYV (140 aa)). The segment at 399 to 486 (YSKAGIPQHH…DGYGDRTLGY (88 aa)) is disordered. Phosphoserine occurs at positions 421, 433, and 434. Tyr435 bears the Phosphotyrosine mark. Positions 447-464 (GERKVGGPHPKYDEDAKR) are enriched in basic and acidic residues. Ser509 carries the post-translational modification Phosphoserine.

The protein belongs to the nectin family. Cis- and trans-homodimer. Can form trans-heterodimers with NECTIN3 and with NECTIN4. Interaction between NECTIN1 and NECTIN3 on the pre- and postsynaptic sites, respectively, initiates the formation of puncta adherentia junctions between axons and dendrites. Interacts (via cytoplasmic domain) with AFDN (via PDZ domain); this interaction recruits NECTIN1 to cadherin-based adherens junctions and provides a connection with the actin cytoskeleton. Interacts with integrin alphaV/beta3. Interacts (via Ig-like C2-type domain 2) with FGFR1, FGFR2 and FGFR3. As to quaternary structure, (Microbial infection) Interacts with herpes pseudorabies virus/PRV envelope glycoprotein D.

It localises to the cell membrane. Its subcellular location is the cell junction. The protein resides in the adherens junction. It is found in the presynaptic cell membrane. In terms of biological role, cell adhesion molecule that promotes cell-cell contacts and plays important roles in the development of the nervous system. Acts by forming homophilic or heterophilic trans-dimers. Heterophilic interactions have been detected between NECTIN1 and NECTIN3 and between NECTIN1 and NECTIN4. Involved in axon guidance by promoting contacts between the commissural axons and the floor plate cells. Involved in synaptogegesis. Has some neurite outgrowth-promoting activity. Promotes formation of checkerboard-like cellular pattern of hair cells and supporting cells in the auditory epithelium via heterophilic interaction with NECTIN3: NECTIN1 is present in the membrane of hair cells and associates with NECTIN3 on supporting cells, thereby mediating heterotypic adhesion between these two cell types. Required for enamel mineralization. Its function is as follows. (Microbial infection) Acts as a receptor for pseudorabies virus/PRV. The polypeptide is Nectin-1 (Mus musculus (Mouse)).